We begin with the raw amino-acid sequence, 146 residues long: Early E3 16 kDa glycoprotein (146 aa).

2 N-linked (GlcNAc...) asparagine; by host glycosylation sites follow: Asn-51 and Asn-84.

In terms of biological role, E3 proteins seem to be dispensable for virus growth in tissue culture cells. They are potentially important for virus growth under special conditions; E3 region may help adenoviruses to evade the immune surveillance of the host. This Human adenovirus B serotype 3 (HAdV-3) protein is Early E3 16 kDa glycoprotein.